The sequence spans 361 residues: Aminomethyltransferase (361 aa).

The protein belongs to the GcvT family. In terms of assembly, the glycine cleavage system is composed of four proteins: P, T, L and H.

The catalysed reaction is N(6)-[(R)-S(8)-aminomethyldihydrolipoyl]-L-lysyl-[protein] + (6S)-5,6,7,8-tetrahydrofolate = N(6)-[(R)-dihydrolipoyl]-L-lysyl-[protein] + (6R)-5,10-methylene-5,6,7,8-tetrahydrofolate + NH4(+). The glycine cleavage system catalyzes the degradation of glycine. In Bacteroides thetaiotaomicron (strain ATCC 29148 / DSM 2079 / JCM 5827 / CCUG 10774 / NCTC 10582 / VPI-5482 / E50), this protein is Aminomethyltransferase.